The following is a 465-amino-acid chain: MNLGGNRFVQIGNGMSNIMYTDANGAVRWEQISPPAGFPQQQRGRGRGHVAFGLPNTLDWLPGFVQATPNSITISNMGGIQISSAGVITAAINSEQNSWMLSSFNPSLKLTRQVTLTDFCDPTAERPGLPIIRLRHHLDAIGSSPSSTPPGRNPQELDEAWAALSELSVSGRSDTTGLRPSLLSLTFLVASRSGEYSDKAAAEAVRAHVLANYRDRRTEQRLDRFGEYLQAMVRTHVFPHKHMTVFGGLISHVIQDKLASLTAVAGGVQEGARTNNSAVPRSSVYVPACAFLDVDHELKLGDASAKFVYLIFVYSQRLRREGVRVYVAVSKFDEVAFEDAVSFLFHKARTESAIRGTEGADAPEPHPNAALPLQELSSSRCEPRCPPSRLNNREFTNALYQWAPDLRGRPNRTSCMYAAYIRLGAIASDSPRTTRRSERFGSVDMPVVWLENVRWDPQDWVECSY.

It belongs to the herpesviridae TRX1 protein family. As to quaternary structure, interacts with TRX2, MCP and capsid vertex component 2/CVC2.

It localises to the virion. Its subcellular location is the host nucleus. Functionally, structural component of the T=16 icosahedral capsid. The capsid is composed of pentamers and hexamers of major capsid protein/MCP, which are linked together by heterotrimers called triplexes. These triplexes are formed by a single molecule of triplex protein 1/TRX1 and two copies of triplex protein 2/TRX2. Additionally, TRX1 is required for efficient transport of TRX2 to the nucleus, which is the site of capsid assembly. This Equus caballus (Horse) protein is Triplex capsid protein 1.